The sequence spans 38 residues: Photosystem II reaction center protein L (38 aa).

A helical transmembrane segment spans residues 17 to 37 (SLFWGLLLIFVLAVLFSNYFF).

Belongs to the PsbL family. PSII is composed of 1 copy each of membrane proteins PsbA, PsbB, PsbC, PsbD, PsbE, PsbF, PsbH, PsbI, PsbJ, PsbK, PsbL, PsbM, PsbT, PsbX, PsbY, PsbZ, Psb30/Ycf12, at least 3 peripheral proteins of the oxygen-evolving complex and a large number of cofactors. It forms dimeric complexes.

The protein localises to the plastid. The protein resides in the chloroplast thylakoid membrane. Its function is as follows. One of the components of the core complex of photosystem II (PSII). PSII is a light-driven water:plastoquinone oxidoreductase that uses light energy to abstract electrons from H(2)O, generating O(2) and a proton gradient subsequently used for ATP formation. It consists of a core antenna complex that captures photons, and an electron transfer chain that converts photonic excitation into a charge separation. This subunit is found at the monomer-monomer interface and is required for correct PSII assembly and/or dimerization. The polypeptide is Photosystem II reaction center protein L (Chaetosphaeridium globosum (Charophycean green alga)).